The sequence spans 89 residues: Large ribosomal subunit protein bL27 (89 aa).

The protein belongs to the bacterial ribosomal protein bL27 family.

The chain is Large ribosomal subunit protein bL27 from Synechococcus sp. (strain JA-3-3Ab) (Cyanobacteria bacterium Yellowstone A-Prime).